The sequence spans 563 residues: Zinc finger protein 503 (563 aa).

Residues 1–10 (MITSPSASRN) show a composition bias toward polar residues. 2 disordered regions span residues 1-48 (MITS…PLRQ) and 101-226 (SQIG…TSVS). Low complexity-rich tracts occupy residues 19 to 33 (SSSS…AVAS) and 112 to 122 (SKLSSVTSNGS). Residues 174–194 (ATCQPFTPRTGSPNSSTSASP) are compositionally biased toward polar residues. Positions 199–211 (GKGERDEKKDSDC) are enriched in basic and acidic residues. Positions 212 to 226 (NKNCSSDGSAPTSVS) are enriched in polar residues. A C2H2-type zinc finger spans residues 431–459 (HVCNWVSANGPCDKRFSSSEELLNHLRTH).

The protein belongs to the Elbow/Noc family. In terms of assembly, interacts with nlz1.

The protein localises to the nucleus. Its function is as follows. Required for segmental gene expression during hindbrain development. May function as a transcriptional repressor. This Danio rerio (Zebrafish) protein is Zinc finger protein 503 (znf503).